The chain runs to 278 residues: Protein EXORDIUM-like 4 (278 aa).

A signal peptide spans 1–23 (MAYNYRFAILLVLLSATVGFTAA). A glycan (N-linked (GlcNAc...) asparagine) is linked at Asn-35.

Belongs to the EXORDIUM family.

The protein resides in the secreted. The protein localises to the extracellular space. It localises to the apoplast. Functionally, may play a role in a brassinosteroid-dependent regulation of growth and development. This chain is Protein EXORDIUM-like 4 (EXL4), found in Arabidopsis thaliana (Mouse-ear cress).